A 443-amino-acid chain; its full sequence is Trigger factor (443 aa).

One can recognise a PPIase FKBP-type domain in the interval 168 to 254; it reads GDFVTIDFEG…IKNLKEKKLP (87 aa).

Belongs to the FKBP-type PPIase family. Tig subfamily.

The protein localises to the cytoplasm. The enzyme catalyses [protein]-peptidylproline (omega=180) = [protein]-peptidylproline (omega=0). In terms of biological role, involved in protein export. Acts as a chaperone by maintaining the newly synthesized protein in an open conformation. Functions as a peptidyl-prolyl cis-trans isomerase. The protein is Trigger factor of Syntrophus aciditrophicus (strain SB).